The chain runs to 249 residues: 23S rRNA (guanosine-2'-O-)-methyltransferase RlmB (249 aa).

G200, I220, and L229 together coordinate S-adenosyl-L-methionine.

It belongs to the class IV-like SAM-binding methyltransferase superfamily. RNA methyltransferase TrmH family. RlmB subfamily.

The protein localises to the cytoplasm. It carries out the reaction guanosine(2251) in 23S rRNA + S-adenosyl-L-methionine = 2'-O-methylguanosine(2251) in 23S rRNA + S-adenosyl-L-homocysteine + H(+). Specifically methylates the ribose of guanosine 2251 in 23S rRNA. The protein is 23S rRNA (guanosine-2'-O-)-methyltransferase RlmB of Xylella fastidiosa (strain 9a5c).